We begin with the raw amino-acid sequence, 296 residues long: Tubulin polyglutamylase complex subunit 2 (296 aa).

A compositionally biased stretch (basic residues) spans 254 to 265; it reads SKNKILIPKKKG. Residues 254-296 form a disordered region; it reads SKNKILIPKKKGPVPPASGQKGPGPLPPPTSKPTTGSGNPVRK. Residues 285 to 296 are compositionally biased toward low complexity; it reads KPTTGSGNPVRK.

In terms of assembly, part of the neuronal tubulin polyglutamylase complex which contains TPGS1, TPGS2, TTLL1, LRRC49 and NICN1. Interacts with CSTPP1 and LRRC49.

It is found in the cytoplasm. The protein resides in the cytoskeleton. Its subcellular location is the microtubule organizing center. The protein localises to the centrosome. It localises to the centriolar satellite. Functionally, subunit of the tubulin polyglutamylase complex (TPGC). The complex mediates cilia and flagella polyglutamylation which is essential for their biogenesis and motility. This Mus musculus (Mouse) protein is Tubulin polyglutamylase complex subunit 2 (Tpgs2).